We begin with the raw amino-acid sequence, 206 residues long: Putative acetyltransferase OgpAT (206 aa).

Positions 5-205 (VVIRRATAAD…EVVVGRRLLD (201 aa)) constitute an N-acetyltransferase domain. Acetyl-CoA contacts are provided by residues 135–138 (HIDL), 144–148 (GRGVG), 175–177 (NPR), and His-184.

It belongs to the acetyltransferase family. As to quaternary structure, monomer.

In terms of biological role, binds acetyl-CoA, but not butyryl-CoA or decanoyl-CoA. May have acetyltransferase activity. The chain is Putative acetyltransferase OgpAT from Oceanicola granulosus (strain ATCC BAA-861 / DSM 15982 / KCTC 12143 / HTCC2516).